We begin with the raw amino-acid sequence, 584 residues long: ATP-dependent lipid A-core flippase (584 aa).

5 helical membrane passes run 18 to 38 (LWPI…TLIL), 65 to 85 (VFVW…FSGF), 155 to 175 (IIGL…ILVL), 252 to 272 (IFDP…LYAA), and 277 to 297 (VMEM…IVLM). Residues 30-312 (VVASITLILN…LTNVSAQFQR (283 aa)) form the ABC transmembrane type-1 domain. The region spanning 344-580 (IIFDDVTFFY…QGIYAQLYKL (237 aa)) is the ABC transporter domain. 378–385 (GRSGSGKS) serves as a coordination point for ATP.

The protein belongs to the ABC transporter superfamily. Lipid exporter (TC 3.A.1.106) family. As to quaternary structure, homodimer.

The protein localises to the cell inner membrane. It catalyses the reaction ATP + H2O + lipid A-core oligosaccharideSide 1 = ADP + phosphate + lipid A-core oligosaccharideSide 2.. Involved in lipopolysaccharide (LPS) biosynthesis. Translocates lipid A-core from the inner to the outer leaflet of the inner membrane. Transmembrane domains (TMD) form a pore in the inner membrane and the ATP-binding domain (NBD) is responsible for energy generation. The sequence is that of ATP-dependent lipid A-core flippase from Blochmanniella pennsylvanica (strain BPEN).